The sequence spans 269 residues: Integral membrane protein 2C (269 aa).

A Phosphothreonine modification is found at T39. A helical; Signal-anchor for type II membrane protein membrane pass occupies residues 57–77; it reads VGGVCYLSMGMVVLLMGLVFA. A BRICHOS domain is found at 138–232; that stretch reads FGGGDPADII…LCNGKDTYRL (95 aa). A disulfide bridge links C165 with C224. N171 carries an N-linked (GlcNAc...) asparagine glycan.

The protein belongs to the ITM2 family. Interacts with BACE1. Interacts with APP. Interacts with STMN2. Type I membrane-bound, as well as soluble, furin has a pre-eminent role in ITM2C proteolytic processing. PCSK7 and PCSK5 may also be involved although to a lesser extent. The soluble form of PCSK7 is incapable of processing ITM2C. Fails to undergo shedding by ADAM10 and intramembrane cleavage by SPPL2B.

It is found in the lysosome membrane. Its subcellular location is the cell membrane. Negative regulator of amyloid-beta peptide production. May inhibit the processing of APP by blocking its access to alpha- and beta-secretase. Binding to the beta-secretase-cleaved APP C-terminal fragment is negligible, suggesting that ITM2C is a poor gamma-secretase cleavage inhibitor. May play a role in TNF-induced cell death and neuronal differentiation. In Sus scrofa (Pig), this protein is Integral membrane protein 2C (ITM2C).